Here is a 75-residue protein sequence, read N- to C-terminus: Tautomerase PptA (75 aa).

The active-site Proton acceptor; via imino nitrogen is P2.

It belongs to the 4-oxalocrotonate tautomerase family. PptA subfamily. Homodimer.

The protein localises to the cytoplasm. The polypeptide is Tautomerase PptA (Klebsiella pneumoniae subsp. pneumoniae (strain ATCC 700721 / MGH 78578)).